The sequence spans 91 residues: Probable Fe(2+)-trafficking protein (91 aa).

The protein belongs to the Fe(2+)-trafficking protein family. As to quaternary structure, monomer.

Its function is as follows. Could be a mediator in iron transactions between iron acquisition and iron-requiring processes, such as synthesis and/or repair of Fe-S clusters in biosynthetic enzymes. In Citrobacter koseri (strain ATCC BAA-895 / CDC 4225-83 / SGSC4696), this protein is Probable Fe(2+)-trafficking protein.